The sequence spans 62 residues: uncharacterized protein (62 aa).

The next 2 helical transmembrane spans lie at 7-27 and 34-51; these read LLLL…VFIA and IIAS…GFTL.

It is found in the cell membrane. This is an uncharacterized protein from Bacillus subtilis (strain 168).